The sequence spans 308 residues: Glutaminase (308 aa).

7 residues coordinate substrate: Ser66, Asn117, Glu161, Asn168, Tyr192, Tyr244, and Val262.

This sequence belongs to the glutaminase family. In terms of assembly, homotetramer.

It catalyses the reaction L-glutamine + H2O = L-glutamate + NH4(+). This chain is Glutaminase, found in Salmonella heidelberg (strain SL476).